The primary structure comprises 141 residues: Hemoglobin subunit alpha-2 (141 aa).

The Globin domain maps to 1–141 (VLTEDDKNHV…VCKDLVSKYR (141 aa)). Residue His-58 participates in O2 binding. A heme b-binding site is contributed by His-87.

It belongs to the globin family. In terms of assembly, the major hemoglobin component (HbIII) is a heterotetramer of two alpha-2 chains and two beta-1 chains. As to expression, red blood cells.

Involved in oxygen transport from the lung to the various peripheral tissues. In Varanus albigularis (White-throated monitor), this protein is Hemoglobin subunit alpha-2.